The primary structure comprises 302 residues: MKIAILSRNKKLYSTRRLQEAALARGHEVDIIDTLHCYMDISSNKPSVRFKGEPLPQYDAIIPRIGASITFYGTAVVRQFEMMGSFSVNESVAISRSRDKLRSMQLLSRKGIGLPRTGFAHSPDNIKDLIANVGGAPVVIKLLEGTQGIGVVLADTNKAAESIVEAFMGIKANILVQEYIKEAGGADIRCFVVGGKVVAAMKRQGAPGEFRSNLHRGGSAALVKLTAVERATAVSAAGAMGLNVCGVDLLRSSHGPVVMEVNSSPGLEGIEAATSKDVANMIIEFIENKKSKPHSTKTRGNG.

In terms of domain architecture, ATP-grasp spans 104-287 (MQLLSRKGIG…VANMIIEFIE (184 aa)). ATP-binding positions include Lys-141, 178–179 (EY), Asp-187, and 211–213 (RSN). The Mg(2+) site is built by Asp-248, Glu-260, and Asn-262. Mn(2+) contacts are provided by Asp-248, Glu-260, and Asn-262.

Belongs to the RimK family. Requires Mg(2+) as cofactor. Mn(2+) serves as cofactor.

The chain is Probable alpha-L-glutamate ligase 1 from Pseudoalteromonas atlantica (strain T6c / ATCC BAA-1087).